The sequence spans 406 residues: Secretion apparatus protein BsaZ (406 aa).

4 helical membrane-spanning segments follow: residues 28–48 (IVALIVIATGALAAPALVDLT), 80–100 (IAAPFVLLCAAAGALPSLVQS), 137–157 (ALLYVGVFALTVRVFAGLYHA), and 175–195 (IVLTVRLVLLFLLCALPVLIL). Positions 341-406 (AANRGGPPPE…APARTGDQNA (66 aa)) are disordered. Residues 370-399 (DACADNAFPDDAPPGAAAPNAGSPDGGAPA) are compositionally biased toward low complexity.

It belongs to the type III secretion exporter family.

It localises to the cell membrane. In terms of biological role, part of the bsa type III secretion system, is involved in the intracellular replication of invading bacteria inside the host cell. Probably necessary for the lysis of the vacuole membrane and escape into the host cell cytoplasm. This Burkholderia pseudomallei (strain 668) protein is Secretion apparatus protein BsaZ (bsaZ).